The following is a 399-amino-acid chain: Probable aspartate/prephenate aminotransferase (399 aa).

G39, W125, and N175 together coordinate L-aspartate. An N6-(pyridoxal phosphate)lysine modification is found at K239. Position 375 (R375) interacts with L-aspartate.

The protein belongs to the class-I pyridoxal-phosphate-dependent aminotransferase family. Homodimer. Pyridoxal 5'-phosphate serves as cofactor.

The protein resides in the cytoplasm. It catalyses the reaction L-aspartate + 2-oxoglutarate = oxaloacetate + L-glutamate. It carries out the reaction L-arogenate + 2-oxoglutarate = prephenate + L-glutamate. Catalyzes the reversible conversion of aspartate and 2-oxoglutarate to glutamate and oxaloacetate. Can also transaminate prephenate in the presence of glutamate. The chain is Probable aspartate/prephenate aminotransferase (aatA) from Rickettsia prowazekii (strain Madrid E).